Consider the following 333-residue polypeptide: Replication factor C subunit 2 (333 aa).

The residue at position 2 (Ala-2) is an N-acetylalanine. Residue 55–62 (GPPGTGKT) participates in ATP binding.

Belongs to the activator 1 small subunits family. Heterotetramer of subunits RFC2, RFC3, RFC4 and RFC5 that can form a complex with RFC1.

It localises to the nucleus. May be involved in DNA replication and thus regulate cell proliferation. The protein is Replication factor C subunit 2 (RFC2) of Arabidopsis thaliana (Mouse-ear cress).